We begin with the raw amino-acid sequence, 1068 residues long: Carbamoyl phosphate synthase large chain (1068 aa).

Positions 1 to 401 (MPRNNDIKKV…ALMKAIRSLE (401 aa)) are carboxyphosphate synthetic domain. Arg-129, Arg-169, Gly-175, Gly-176, Arg-208, Ile-210, Glu-215, Gly-241, Val-242, His-243, Gln-284, and Glu-298 together coordinate ATP. An ATP-grasp 1 domain is found at 133–327 (KDTMEKIGEP…IAKVTAKIAL (195 aa)). Mg(2+)-binding residues include Gln-284, Glu-298, and Asn-300. The Mn(2+) site is built by Gln-284, Glu-298, and Asn-300. An oligomerization domain region spans residues 402 to 546 (QHVDSLMSYD…YSVFGSENEA (145 aa)). Residues 547-930 (AETNPQKKVL…ALYKAFEGAG (384 aa)) are carbamoyl phosphate synthetic domain. The ATP-grasp 2 domain maps to 672–862 (DEILQKTGIP…IVDLAARIIM (191 aa)). 10 residues coordinate ATP: Arg-708, Lys-747, Leu-749, Glu-753, Gly-778, Val-779, His-780, Ser-781, Gln-821, and Glu-833. Mg(2+)-binding residues include Gln-821, Glu-833, and Asn-835. Residues Gln-821, Glu-833, and Asn-835 each contribute to the Mn(2+) site. The region spanning 931 to 1068 (VELPKYKQMI…PVDIATVKNL (138 aa)) is the MGS-like domain. Residues 931–1068 (VELPKYKQMI…PVDIATVKNL (138 aa)) form an allosteric domain region.

Belongs to the CarB family. Composed of two chains; the small (or glutamine) chain promotes the hydrolysis of glutamine to ammonia, which is used by the large (or ammonia) chain to synthesize carbamoyl phosphate. Tetramer of heterodimers (alpha,beta)4. Mg(2+) is required as a cofactor. The cofactor is Mn(2+).

It catalyses the reaction hydrogencarbonate + L-glutamine + 2 ATP + H2O = carbamoyl phosphate + L-glutamate + 2 ADP + phosphate + 2 H(+). It carries out the reaction hydrogencarbonate + NH4(+) + 2 ATP = carbamoyl phosphate + 2 ADP + phosphate + 2 H(+). The protein operates within amino-acid biosynthesis; L-arginine biosynthesis; carbamoyl phosphate from bicarbonate: step 1/1. It functions in the pathway pyrimidine metabolism; UMP biosynthesis via de novo pathway; (S)-dihydroorotate from bicarbonate: step 1/3. Large subunit of the glutamine-dependent carbamoyl phosphate synthetase (CPSase). CPSase catalyzes the formation of carbamoyl phosphate from the ammonia moiety of glutamine, carbonate, and phosphate donated by ATP, constituting the first step of 2 biosynthetic pathways, one leading to arginine and/or urea and the other to pyrimidine nucleotides. The large subunit (synthetase) binds the substrates ammonia (free or transferred from glutamine from the small subunit), hydrogencarbonate and ATP and carries out an ATP-coupled ligase reaction, activating hydrogencarbonate by forming carboxy phosphate which reacts with ammonia to form carbamoyl phosphate. In Agathobacter rectalis (strain ATCC 33656 / DSM 3377 / JCM 17463 / KCTC 5835 / VPI 0990) (Eubacterium rectale), this protein is Carbamoyl phosphate synthase large chain.